Consider the following 450-residue polypeptide: Methylenetetrahydrofolate--tRNA-(uracil-5-)-methyltransferase TrmFO (450 aa).

10–15 (GGGLAG) is an FAD binding site.

It belongs to the MnmG family. TrmFO subfamily. The cofactor is FAD.

It is found in the cytoplasm. The catalysed reaction is uridine(54) in tRNA + (6R)-5,10-methylene-5,6,7,8-tetrahydrofolate + NADH + H(+) = 5-methyluridine(54) in tRNA + (6S)-5,6,7,8-tetrahydrofolate + NAD(+). The enzyme catalyses uridine(54) in tRNA + (6R)-5,10-methylene-5,6,7,8-tetrahydrofolate + NADPH + H(+) = 5-methyluridine(54) in tRNA + (6S)-5,6,7,8-tetrahydrofolate + NADP(+). Catalyzes the folate-dependent formation of 5-methyl-uridine at position 54 (M-5-U54) in all tRNAs. The sequence is that of Methylenetetrahydrofolate--tRNA-(uracil-5-)-methyltransferase TrmFO from Anaeromyxobacter dehalogenans (strain 2CP-C).